The following is a 412-amino-acid chain: Multifunctional CCA protein (412 aa).

ATP-binding residues include G8 and R11. 2 residues coordinate CTP: G8 and R11. Mg(2+)-binding residues include D21 and D23. ATP contacts are provided by R91, R137, and R140. The CTP site is built by R91, R137, and R140. One can recognise an HD domain in the interval 228–329 (TGIHTLMTLS…VKLFDSIDAW (102 aa)).

The protein belongs to the tRNA nucleotidyltransferase/poly(A) polymerase family. Bacterial CCA-adding enzyme type 1 subfamily. Monomer. Can also form homodimers and oligomers. The cofactor is Mg(2+). Requires Ni(2+) as cofactor.

The enzyme catalyses a tRNA precursor + 2 CTP + ATP = a tRNA with a 3' CCA end + 3 diphosphate. It carries out the reaction a tRNA with a 3' CCA end + 2 CTP + ATP = a tRNA with a 3' CCACCA end + 3 diphosphate. In terms of biological role, catalyzes the addition and repair of the essential 3'-terminal CCA sequence in tRNAs without using a nucleic acid template. Adds these three nucleotides in the order of C, C, and A to the tRNA nucleotide-73, using CTP and ATP as substrates and producing inorganic pyrophosphate. tRNA 3'-terminal CCA addition is required both for tRNA processing and repair. Also involved in tRNA surveillance by mediating tandem CCA addition to generate a CCACCA at the 3' terminus of unstable tRNAs. While stable tRNAs receive only 3'-terminal CCA, unstable tRNAs are marked with CCACCA and rapidly degraded. The sequence is that of Multifunctional CCA protein from Shigella flexneri.